Consider the following 283-residue polypeptide: Elongation factor Ts (283 aa).

The segment at Thr-84–Val-87 is involved in Mg(2+) ion dislocation from EF-Tu.

The protein belongs to the EF-Ts family.

It localises to the cytoplasm. Associates with the EF-Tu.GDP complex and induces the exchange of GDP to GTP. It remains bound to the aminoacyl-tRNA.EF-Tu.GTP complex up to the GTP hydrolysis stage on the ribosome. This chain is Elongation factor Ts, found in Bifidobacterium longum subsp. infantis (strain ATCC 15697 / DSM 20088 / JCM 1222 / NCTC 11817 / S12).